A 474-amino-acid chain; its full sequence is Trichothecene 3-O-acetyltransferase (474 aa).

Belongs to the trichothecene 3-O-acetyltransferase family.

Its function is as follows. Trichothecene 3-O-acetyltransferase involved in self-protection against trichothecenes, mycotoxins acting as eukaryotic protein synthesis inhibitors. Its existence is surprising in a non-trichothecene producer organism which needs no self-protection again endogenic trichothecenes. The persistence of this non-essential gene may be due to a selective advantage that it may confer, like a resistance to exogenic trichothecenes. This chain is Trichothecene 3-O-acetyltransferase (AYT1), found in Saccharomyces cerevisiae (strain ATCC 204508 / S288c) (Baker's yeast).